We begin with the raw amino-acid sequence, 479 residues long: Ribulose bisphosphate carboxylase large chain (479 aa).

The propeptide occupies 1 to 2 (MS). Substrate-binding residues include Asn123 and Thr173. Lys175 functions as the Proton acceptor in the catalytic mechanism. Lys177 contributes to the substrate binding site. Residues Lys201, Asp203, and Glu204 each coordinate Mg(2+). An N6-carboxylysine modification is found at Lys201. Residue Ser208 is modified to Phosphoserine. His294 (proton acceptor) is an active-site residue. Arg295 and His327 together coordinate substrate. Thr330 bears the Phosphothreonine mark. Position 379 (Ser379) interacts with substrate.

It belongs to the RuBisCO large chain family. Type I subfamily. Heterohexadecamer of 8 large chains and 8 small chains; disulfide-linked. The disulfide link is formed within the large subunit homodimers. The cofactor is Mg(2+). The disulfide bond which can form in the large chain dimeric partners within the hexadecamer appears to be associated with oxidative stress and protein turnover.

It is found in the plastid. Its subcellular location is the chloroplast. It catalyses the reaction 2 (2R)-3-phosphoglycerate + 2 H(+) = D-ribulose 1,5-bisphosphate + CO2 + H2O. The enzyme catalyses D-ribulose 1,5-bisphosphate + O2 = 2-phosphoglycolate + (2R)-3-phosphoglycerate + 2 H(+). In terms of biological role, ruBisCO catalyzes two reactions: the carboxylation of D-ribulose 1,5-bisphosphate, the primary event in carbon dioxide fixation, as well as the oxidative fragmentation of the pentose substrate in the photorespiration process. Both reactions occur simultaneously and in competition at the same active site. In Crucihimalaya wallichii (Rock-cress), this protein is Ribulose bisphosphate carboxylase large chain.